Consider the following 162-residue polypeptide: SsrA-binding protein (162 aa).

The disordered stretch occupies residues Asp140–Gly162.

It belongs to the SmpB family.

The protein localises to the cytoplasm. Required for rescue of stalled ribosomes mediated by trans-translation. Binds to transfer-messenger RNA (tmRNA), required for stable association of tmRNA with ribosomes. tmRNA and SmpB together mimic tRNA shape, replacing the anticodon stem-loop with SmpB. tmRNA is encoded by the ssrA gene; the 2 termini fold to resemble tRNA(Ala) and it encodes a 'tag peptide', a short internal open reading frame. During trans-translation Ala-aminoacylated tmRNA acts like a tRNA, entering the A-site of stalled ribosomes, displacing the stalled mRNA. The ribosome then switches to translate the ORF on the tmRNA; the nascent peptide is terminated with the 'tag peptide' encoded by the tmRNA and targeted for degradation. The ribosome is freed to recommence translation, which seems to be the essential function of trans-translation. The polypeptide is SsrA-binding protein (Roseobacter denitrificans (strain ATCC 33942 / OCh 114) (Erythrobacter sp. (strain OCh 114))).